A 288-amino-acid chain; its full sequence is Elongation factor Ts (288 aa).

Residues 79–82 are involved in Mg(2+) ion dislocation from EF-Tu; that stretch reads TDFV.

It belongs to the EF-Ts family.

The protein resides in the cytoplasm. Associates with the EF-Tu.GDP complex and induces the exchange of GDP to GTP. It remains bound to the aminoacyl-tRNA.EF-Tu.GTP complex up to the GTP hydrolysis stage on the ribosome. The sequence is that of Elongation factor Ts from Ehrlichia ruminantium (strain Welgevonden).